Reading from the N-terminus, the 359-residue chain is Mannose-1-phosphate guanylyltransferase (359 aa).

Belongs to the transferase hexapeptide repeat family.

The catalysed reaction is alpha-D-mannose 1-phosphate + GTP + H(+) = GDP-alpha-D-mannose + diphosphate. The protein operates within cell wall biogenesis. It functions in the pathway nucleotide-sugar biosynthesis; GDP-alpha-D-mannose biosynthesis; GDP-alpha-D-mannose from alpha-D-mannose 1-phosphate (GTP route): step 1/1. Its function is as follows. Catalyzes the formation of GDP-mannose from D-mannose-1-phosphate and GTP. Plays an important role in the synthesis of different glycoconjugates which are responsible for cell wall structure, virulence and immunomodulatory activity of M.tuberculosis. The polypeptide is Mannose-1-phosphate guanylyltransferase (Mycobacterium tuberculosis (strain ATCC 25618 / H37Rv)).